We begin with the raw amino-acid sequence, 542 residues long: CTP synthase (542 aa).

An amidoligase domain region spans residues 1 to 265 (MARYVFITGG…DSEVLSAFGM (265 aa)). Residue S13 participates in CTP binding. UTP is bound at residue S13. ATP is bound at residue 14–19 (SLGKGI). L-glutamine is bound at residue Y54. D71 serves as a coordination point for ATP. D71 and E139 together coordinate Mg(2+). Residues 146-148 (DIE), 186-191 (KTKPTQ), and K222 each bind CTP. UTP contacts are provided by residues 186 to 191 (KTKPTQ) and K222. Residues 291–541 (TIAVVGKYTG…IEATVEQSRL (251 aa)) enclose the Glutamine amidotransferase type-1 domain. A353 contacts L-glutamine. C380 serves as the catalytic Nucleophile; for glutamine hydrolysis. L-glutamine is bound by residues 381–384 (FGMQ), E404, and R469. Catalysis depends on residues H514 and E516.

Belongs to the CTP synthase family. Homotetramer.

The catalysed reaction is UTP + L-glutamine + ATP + H2O = CTP + L-glutamate + ADP + phosphate + 2 H(+). It carries out the reaction L-glutamine + H2O = L-glutamate + NH4(+). The enzyme catalyses UTP + NH4(+) + ATP = CTP + ADP + phosphate + 2 H(+). Its pathway is pyrimidine metabolism; CTP biosynthesis via de novo pathway; CTP from UDP: step 2/2. Allosterically activated by GTP, when glutamine is the substrate; GTP has no effect on the reaction when ammonia is the substrate. The allosteric effector GTP functions by stabilizing the protein conformation that binds the tetrahedral intermediate(s) formed during glutamine hydrolysis. Inhibited by the product CTP, via allosteric rather than competitive inhibition. In terms of biological role, catalyzes the ATP-dependent amination of UTP to CTP with either L-glutamine or ammonia as the source of nitrogen. Regulates intracellular CTP levels through interactions with the four ribonucleotide triphosphates. The chain is CTP synthase from Bartonella henselae (strain ATCC 49882 / DSM 28221 / CCUG 30454 / Houston 1) (Rochalimaea henselae).